We begin with the raw amino-acid sequence, 78 residues long: Exodeoxyribonuclease 7 small subunit (78 aa).

The protein belongs to the XseB family. As to quaternary structure, heterooligomer composed of large and small subunits.

It localises to the cytoplasm. It catalyses the reaction Exonucleolytic cleavage in either 5'- to 3'- or 3'- to 5'-direction to yield nucleoside 5'-phosphates.. In terms of biological role, bidirectionally degrades single-stranded DNA into large acid-insoluble oligonucleotides, which are then degraded further into small acid-soluble oligonucleotides. The protein is Exodeoxyribonuclease 7 small subunit of Pediococcus pentosaceus (strain ATCC 25745 / CCUG 21536 / LMG 10740 / 183-1w).